A 615-amino-acid chain; its full sequence is Dihydroxy-acid dehydratase (615 aa).

D81 serves as a coordination point for Mg(2+). Residue C122 coordinates [2Fe-2S] cluster. 2 residues coordinate Mg(2+): D123 and K124. K124 is modified (N6-carboxylysine). Residue C195 participates in [2Fe-2S] cluster binding. Residue E491 coordinates Mg(2+). S517 functions as the Proton acceptor in the catalytic mechanism.

This sequence belongs to the IlvD/Edd family. In terms of assembly, homodimer. [2Fe-2S] cluster is required as a cofactor. The cofactor is Mg(2+).

It catalyses the reaction (2R)-2,3-dihydroxy-3-methylbutanoate = 3-methyl-2-oxobutanoate + H2O. It carries out the reaction (2R,3R)-2,3-dihydroxy-3-methylpentanoate = (S)-3-methyl-2-oxopentanoate + H2O. It functions in the pathway amino-acid biosynthesis; L-isoleucine biosynthesis; L-isoleucine from 2-oxobutanoate: step 3/4. Its pathway is amino-acid biosynthesis; L-valine biosynthesis; L-valine from pyruvate: step 3/4. Functionally, functions in the biosynthesis of branched-chain amino acids. Catalyzes the dehydration of (2R,3R)-2,3-dihydroxy-3-methylpentanoate (2,3-dihydroxy-3-methylvalerate) into 2-oxo-3-methylpentanoate (2-oxo-3-methylvalerate) and of (2R)-2,3-dihydroxy-3-methylbutanoate (2,3-dihydroxyisovalerate) into 2-oxo-3-methylbutanoate (2-oxoisovalerate), the penultimate precursor to L-isoleucine and L-valine, respectively. The polypeptide is Dihydroxy-acid dehydratase (Shewanella piezotolerans (strain WP3 / JCM 13877)).